The chain runs to 930 residues: Translation initiation factor IF-2 (930 aa).

Residues 50–67 show a composition bias toward low complexity; that stretch reads FKPAAAPKVEAKPAAPKV. Disordered stretches follow at residues 50–217 and 260–346; these read FKPA…SSEE and EVVP…HELP. Basic and acidic residues-rich tracts occupy residues 68–90 and 110–125; these read SAEK…EAKP and FKAE…AERR. Low complexity predominate over residues 129–141; that stretch reads KGNNRDQQQNGNR. 2 stretches are compositionally biased toward basic and acidic residues: residues 157–167 and 262–295; these read RDNRRFNDQAK and VPEK…DGPR. Positions 309–318 are enriched in low complexity; it reads NQKNSNWNNN. Residues 337 to 346 show a composition bias toward basic and acidic residues; sequence VTERKFHELP. A tr-type G domain is found at 432–599; sequence ERPPVVTIMG…TVLLVAEIQE (168 aa). The tract at residues 441–448 is G1; that stretch reads GHVDHGKT. Residue 441–448 coordinates GTP; it reads GHVDHGKT. Residues 466–470 form a G2 region; that stretch reads GITQH. The tract at residues 487-490 is G3; it reads DTPG. GTP contacts are provided by residues 487–491 and 541–544; these read DTPGH and NKID. Residues 541-544 form a G4 region; that stretch reads NKID. The tract at residues 577-579 is G5; that stretch reads SAK.

This sequence belongs to the TRAFAC class translation factor GTPase superfamily. Classic translation factor GTPase family. IF-2 subfamily.

It localises to the cytoplasm. One of the essential components for the initiation of protein synthesis. Protects formylmethionyl-tRNA from spontaneous hydrolysis and promotes its binding to the 30S ribosomal subunits. Also involved in the hydrolysis of GTP during the formation of the 70S ribosomal complex. The chain is Translation initiation factor IF-2 from Streptococcus pneumoniae (strain ATCC 700669 / Spain 23F-1).